The primary structure comprises 354 residues: Serine/threonine-protein kinase-transforming protein mos (354 aa).

The 277-residue stretch at 74 to 350 (VCLMHRLGSG…LLQRDLKAFR (277 aa)) folds into the Protein kinase domain. ATP contacts are provided by residues 80–88 (LGSGGFGSV) and Lys-101. The active-site Proton acceptor is the Asp-209.

Belongs to the protein kinase superfamily. Ser/Thr protein kinase family.

It catalyses the reaction L-seryl-[protein] + ATP = O-phospho-L-seryl-[protein] + ADP + H(+). The catalysed reaction is L-threonyl-[protein] + ATP = O-phospho-L-threonyl-[protein] + ADP + H(+). This chain is Serine/threonine-protein kinase-transforming protein mos (V-MOS), found in Moloney murine sarcoma virus (strain ts110) (MoMSV).